Here is a 262-residue protein sequence, read N- to C-terminus: Acyl-[acyl-carrier-protein]--UDP-N-acetylglucosamine O-acyltransferase (262 aa).

It belongs to the transferase hexapeptide repeat family. LpxA subfamily. In terms of assembly, homotrimer.

It is found in the cytoplasm. It catalyses the reaction a (3R)-hydroxyacyl-[ACP] + UDP-N-acetyl-alpha-D-glucosamine = a UDP-3-O-[(3R)-3-hydroxyacyl]-N-acetyl-alpha-D-glucosamine + holo-[ACP]. It functions in the pathway glycolipid biosynthesis; lipid IV(A) biosynthesis; lipid IV(A) from (3R)-3-hydroxytetradecanoyl-[acyl-carrier-protein] and UDP-N-acetyl-alpha-D-glucosamine: step 1/6. Functionally, involved in the biosynthesis of lipid A, a phosphorylated glycolipid that anchors the lipopolysaccharide to the outer membrane of the cell. The protein is Acyl-[acyl-carrier-protein]--UDP-N-acetylglucosamine O-acyltransferase of Salmonella dublin (strain CT_02021853).